Consider the following 227-residue polypeptide: GFP-like non-fluorescent chromoprotein (227 aa).

Positions 63 to 65 form a cross-link, 2-iminomethyl-5-imidazolinone (Glu-Gly); sequence EYG. 2,3-didehydrotyrosine is present on Y64.

Belongs to the GFP family. In terms of assembly, homotetramer. In terms of processing, contains a chromophore consisting of modified amino acid residues. The chromophore is formed by autocatalytic backbone condensation between Xaa-N and Gly-(N+2), oxidation of Tyr-(N+1) to didehydrotyrosine, and formation of a double bond to the alpha-amino nitrogen of residue Xaa-N. Maturation of the chromophore requires nothing other than molecular oxygen. The precise stereochemistry of the tyrosine has not been determined.

Non-fluorescent pigment protein that is lilac in color. The polypeptide is GFP-like non-fluorescent chromoprotein (Radianthus crispa (Leathery sea anemone)).